The primary structure comprises 243 residues: uncharacterized protein (243 aa).

The disordered stretch occupies residues 71 to 120 (KRTNVSQRNRKKGIKNNRPHKDINSSPDWGNAHRGTDWQSEKANGMNRAK). The span at 78 to 88 (RNRKKGIKNNR) shows a compositional bias: basic residues. Position 96 is a phosphoserine (Ser96).

This is an uncharacterized protein from Saccharomyces cerevisiae (strain ATCC 204508 / S288c) (Baker's yeast).